A 441-amino-acid polypeptide reads, in one-letter code: Amino-acid acetyltransferase (441 aa).

The N-acetyltransferase domain maps to 295–434 (EQIRRANIND…QALYNYQRRS (140 aa)).

The protein belongs to the acetyltransferase family. ArgA subfamily. Homohexamer.

The protein localises to the cytoplasm. The enzyme catalyses L-glutamate + acetyl-CoA = N-acetyl-L-glutamate + CoA + H(+). It participates in amino-acid biosynthesis; L-arginine biosynthesis; N(2)-acetyl-L-ornithine from L-glutamate: step 1/4. The polypeptide is Amino-acid acetyltransferase (Edwardsiella ictaluri (strain 93-146)).